The sequence spans 481 residues: 5-hydroxytryptamine receptor 2B (481 aa).

Topologically, residues 1-56 (MALSYRVSELQSTIPEHILQSTFVHVISSNWSGLQTESIPEEMKQIVEEQGNKLHW) are extracellular. N30 carries N-linked (GlcNAc...) asparagine glycosylation. Residues 57 to 79 (AALLILMVIIPTIGGNTLVILAV) form a helical membrane-spanning segment. Residues 80 to 90 (SLEKKLQYATN) are Cytoplasmic-facing. Residues 91–113 (YFLMSLAVADLLVGLFVMPIALL) traverse the membrane as a helical segment. Over 114 to 129 (TIMFEAMWPLPLVLCP) the chain is Extracellular. Residues C128 and C207 are joined by a disulfide bond. The chain crosses the membrane as a helical span at residues 130–151 (AWLFLDVLFSTASIMHLCAISV). Ergotamine is bound by residues D135 and T140. The DRY motif; important for ligand-induced conformation changes motif lies at 152-154 (DRY). Residues 152-171 (DRYIAIKKPIQANQYNSRAT) lie on the Cytoplasmic side of the membrane. The helical transmembrane segment at 172 to 192 (AFIKITVVWLISIGIAIPVPI) threads the bilayer. The Extracellular portion of the chain corresponds to 193 to 216 (KGIETDVDNPNNITCVLTKERFGD). Ergotamine is bound at residue L209. The [DE]RFG motif; may stabilize a conformation that preferentially activates signaling via beta-arrestin family members signature appears at 212–215 (ERFG). A helical membrane pass occupies residues 217–239 (FMLFGSLAAFFTPLAIMIVTYFL). Over 240–324 (TIHALQKKAY…TISNEQRASK (85 aa)) the chain is Cytoplasmic. A helical membrane pass occupies residues 325 to 345 (VLGIVFFLFLLMWCPFFITNI). Residues 346–360 (TLVLCDSCNQTTLQM) are Extracellular-facing. A disulfide bond links C350 and C353. Residues 361–382 (LLEIFVWIGYVSSGVNPLVYTL) traverse the membrane as a helical segment. An NPxxY motif; important for ligand-induced conformation changes and signaling motif is present at residues 376–380 (NPLVY). At 383 to 481 (FNKTFRDAFG…DKTEEQVSYV (99 aa)) the chain is on the cytoplasmic side. Residue C397 is the site of S-palmitoyl cysteine attachment. The PDZ-binding motif lies at 479–481 (SYV).

The protein belongs to the G-protein coupled receptor 1 family. Interacts (via C-terminus) with MPDZ. Ubiquitous. Detected in liver, kidney, heart, pulmonary artery, and intestine. Detected at lower levels in blood, placenta and brain, especially in cerebellum, occipital cortex and frontal cortex.

Its subcellular location is the cell membrane. The protein resides in the synapse. The protein localises to the synaptosome. In terms of biological role, G-protein coupled receptor for 5-hydroxytryptamine (serotonin). Also functions as a receptor for various ergot alkaloid derivatives and psychoactive substances. Ligand binding causes a conformation change that triggers signaling via guanine nucleotide-binding proteins (G proteins) and modulates the activity of downstream effectors. HTR2B is coupled to G(q)/G(11) G alpha proteins and activates phospholipase C-beta, releasing diacylglycerol (DAG) and inositol 1,4,5-trisphosphate (IP3) second messengers that modulate the activity of phosphatidylinositol 3-kinase and promote the release of Ca(2+) ions from intracellular stores, respectively. Beta-arrestin family members inhibit signaling via G proteins and mediate activation of alternative signaling pathways. Plays a role in the regulation of dopamine and 5-hydroxytryptamine release, 5-hydroxytryptamine uptake and in the regulation of extracellular dopamine and 5-hydroxytryptamine levels, and thereby affects neural activity. May play a role in the perception of pain. Plays a role in the regulation of behavior, including impulsive behavior. Required for normal proliferation of embryonic cardiac myocytes and normal heart development. Protects cardiomyocytes against apoptosis. Plays a role in the adaptation of pulmonary arteries to chronic hypoxia. Plays a role in vasoconstriction. Required for normal osteoblast function and proliferation, and for maintaining normal bone density. Required for normal proliferation of the interstitial cells of Cajal in the intestine. The sequence is that of 5-hydroxytryptamine receptor 2B from Homo sapiens (Human).